The sequence spans 508 residues: Strychnine-11-hydroxylase (508 aa).

The chain crosses the membrane as a helical span at residues 5–25; sequence MSFLLLFSLCFLIHCFVFLLI. Cys445 provides a ligand contact to heme.

The protein belongs to the cytochrome P450 family. It depends on heme as a cofactor.

It localises to the membrane. The catalysed reaction is beta-colubrine + reduced [NADPH--hemoprotein reductase] + O2 = 11-demethylbrucine + oxidized [NADPH--hemoprotein reductase] + H2O + H(+). The protein operates within alkaloid biosynthesis. Functionally, monooxygenase involved in the biosynthesis of curare monoterpene indole alkaloids (MIAs), natural products such as strychnine, a neurotoxic compound used as a pesticide to control rodents, and its pharmacologically active derivatives, including brucine, used to regulate blood pressure. Curare alkaloids act as animal glycine receptor antagonists. Catalyzes the conversion of beta-colubrine to 11-deMe brucine. The chain is Strychnine-11-hydroxylase from Strychnos nux-vomica (Poison nut).